A 100-amino-acid polypeptide reads, in one-letter code: Large ribosomal subunit protein uL23 (100 aa).

Belongs to the universal ribosomal protein uL23 family. Part of the 50S ribosomal subunit. Contacts protein L29, and trigger factor when it is bound to the ribosome.

One of the early assembly proteins it binds 23S rRNA. One of the proteins that surrounds the polypeptide exit tunnel on the outside of the ribosome. Forms the main docking site for trigger factor binding to the ribosome. This Thermosynechococcus vestitus (strain NIES-2133 / IAM M-273 / BP-1) protein is Large ribosomal subunit protein uL23.